The chain runs to 279 residues: Large ribosomal subunit protein uL2 (279 aa).

Disordered regions lie at residues 1–59 (MGIR…GGHK) and 224–279 (VAMN…KNKR). 2 stretches are compositionally biased toward basic residues: residues 50–59 (TTRHKGGGHK) and 269–279 (VRRRRTGKNKR).

Belongs to the universal ribosomal protein uL2 family. Part of the 50S ribosomal subunit. Forms a bridge to the 30S subunit in the 70S ribosome.

Functionally, one of the primary rRNA binding proteins. Required for association of the 30S and 50S subunits to form the 70S ribosome, for tRNA binding and peptide bond formation. It has been suggested to have peptidyltransferase activity; this is somewhat controversial. Makes several contacts with the 16S rRNA in the 70S ribosome. The polypeptide is Large ribosomal subunit protein uL2 (Arthrobacter sp. (strain FB24)).